The sequence spans 277 residues: Large ribosomal subunit protein uL2 (277 aa).

The disordered stretch occupies residues 222-277 (GSVMNPNDHPHGGGEGKSPVGHPGPLTPWGKPALGLKTRKNKKYSDKFIIKRKNKK).

Belongs to the universal ribosomal protein uL2 family. Part of the 50S ribosomal subunit. Forms a bridge to the 30S subunit in the 70S ribosome.

One of the primary rRNA binding proteins. Required for association of the 30S and 50S subunits to form the 70S ribosome, for tRNA binding and peptide bond formation. It has been suggested to have peptidyltransferase activity; this is somewhat controversial. Makes several contacts with the 16S rRNA in the 70S ribosome. The polypeptide is Large ribosomal subunit protein uL2 (Clostridium kluyveri (strain NBRC 12016)).